The following is a 333-amino-acid chain: MTGTGPHGDPAEDPAGPDDTAAETDGPAEPTEPVDASEAEMTDTTETTAQTGTTAEADASEEFEGPRRRARRERAERRAARDRAMAIEQARREAKRRAVAGALDPTKSVPRNTIRGLKVLMWAALVSVLAVALGLLLYFTPIMSARNVEVSGLAEIPQEEVLTAAAVAPGTPLLQVDTDAVAERVATIRRVATARVQREYPSTLKISIVERVPVVVKDYPDGPHLFDRDGVDFATGPAPLALPYLDADNPGPNDPATRAALDVMMALPPDVAAQVGRIAAPSVASITLTLIDGRVVVWGTDDRTQEKALKLAALLTQPGTTYDVSSPDLPTVK.

The segment at 1-99 (MTGTGPHGDP…ARREAKRRAV (99 aa)) is disordered. Over 1 to 118 (MTGTGPHGDP…VPRNTIRGLK (118 aa)) the chain is Cytoplasmic. A compositionally biased stretch (acidic residues) spans 11 to 22 (AEDPAGPDDTAA). Low complexity predominate over residues 44–57 (TTETTAQTGTTAEA). Basic and acidic residues predominate over residues 73–92 (ERAERRAARDRAMAIEQARR). A helical transmembrane segment spans residues 119–139 (VLMWAALVSVLAVALGLLLYF). At 140–333 (TPIMSARNVE…VSSPDLPTVK (194 aa)) the chain is on the extracellular side. Residues 143–211 (MSARNVEVSG…STLKISIVER (69 aa)) enclose the POTRA domain.

This sequence belongs to the FtsQ/DivIB family. FtsQ subfamily.

The protein localises to the cell membrane. Functionally, essential cell division protein. The chain is Cell division protein FtsQ from Mycolicibacterium smegmatis (strain ATCC 700084 / mc(2)155) (Mycobacterium smegmatis).